We begin with the raw amino-acid sequence, 165 residues long: uncharacterized protein (165 aa).

The Cupin type-1 domain occupies 28–139 (QNALKDTGLA…KPNEREEAVK (112 aa)).

This is an uncharacterized protein from Bacillus subtilis (strain 168).